A 174-amino-acid polypeptide reads, in one-letter code: Ribosome maturation factor RimM (174 aa).

One can recognise a PRC barrel domain in the interval 95 to 174 (DDEFYWRDLI…QIQVEWPSDF (80 aa)).

Belongs to the RimM family. Binds ribosomal protein uS19.

It is found in the cytoplasm. In terms of biological role, an accessory protein needed during the final step in the assembly of 30S ribosomal subunit, possibly for assembly of the head region. Essential for efficient processing of 16S rRNA. May be needed both before and after RbfA during the maturation of 16S rRNA. It has affinity for free ribosomal 30S subunits but not for 70S ribosomes. The chain is Ribosome maturation factor RimM from Idiomarina loihiensis (strain ATCC BAA-735 / DSM 15497 / L2-TR).